Reading from the N-terminus, the 204-residue chain is Proteasome subunit beta type-3-B (204 aa).

The protein belongs to the peptidase T1B family. As to quaternary structure, component of the 20S core complex of the 26S proteasome. The 26S proteasome is composed of a core protease (CP), known as the 20S proteasome, capped at one or both ends by the 19S regulatory particle (RP/PA700). The 20S proteasome core is composed of 28 subunits that are arranged in four stacked rings, resulting in a barrel-shaped structure. The two end rings are each formed by seven alpha subunits, and the two central rings are each formed by seven beta subunits. The catalytic chamber with the active sites is on the inside of the barrel.

The protein localises to the cytoplasm. It is found in the nucleus. Its function is as follows. Non-catalytic component of the proteasome, a multicatalytic proteinase complex which is characterized by its ability to cleave peptides with Arg, Phe, Tyr, Leu, and Glu adjacent to the leaving group at neutral or slightly basic pH. The proteasome has an ATP-dependent proteolytic activity. The chain is Proteasome subunit beta type-3-B (PBC2) from Arabidopsis thaliana (Mouse-ear cress).